The primary structure comprises 416 residues: Pigment epithelium-derived factor (416 aa).

Positions 1-20 (MQALVLLLWTGALLGFGRCQ) are cleaved as a signal peptide. Ser112 and Ser225 each carry phosphoserine. Residue Asn283 is glycosylated (N-linked (GlcNAc...) asparagine).

It belongs to the serpin family. In terms of assembly, interacts with PNPLA2; this interaction stimulates the phospholipase A2 activity of PNPLA2. In terms of tissue distribution, retinal pigment epithelial cells. Located in the interphotoreceptor matrix (IPM) which is between the retinal pigment epithelium and the neural retina.

The protein localises to the secreted. The protein resides in the melanosome. In terms of biological role, neurotrophic protein; induces extensive neuronal differentiation in retinoblastoma cells. Potent inhibitor of angiogenesis. As it does not undergo the S (stressed) to R (relaxed) conformational transition characteristic of active serpins, it exhibits no serine protease inhibitory activity. This is Pigment epithelium-derived factor (SERPINF1) from Bos taurus (Bovine).